Here is a 1044-residue protein sequence, read N- to C-terminus: Translation initiation factor IF-2 (1044 aa).

The segment at 55-458 (EAQEGQGAGK…KRKASAQERR (404 aa)) is disordered. A compositionally biased stretch (low complexity) spans 57 to 77 (QEGQGAGKSAAKSAKPAAQPK). Over residues 104–146 (LSEKRERRPLTERRPLAERRPLAERPLVDRPVTERPLAERPAA) the composition is skewed to basic and acidic residues. Low complexity-rich tracts occupy residues 147 to 168 (ELRP…AQPV), 190 to 231 (KAQP…QKPA), and 254 to 265 (ASSRPASAAPAA). A compositionally biased stretch (basic and acidic residues) spans 267 to 281 (GEKRPAAAAERREEP). Low complexity-rich tracts occupy residues 352-375 (AAGQ…AGAP) and 383-395 (APQR…APLA). The segment covering 399–444 (LDPKVAEQAKAGEGKPRYGQSGDKRRADLYDRREHPSSQPSEEKLF) has biased composition (basic and acidic residues). A tr-type G domain is found at 546-714 (PRHPVVTIMG…ILVLAEVSDL (169 aa)). A G1 region spans residues 555–562 (GHVDHGKT). Position 555 to 562 (555 to 562 (GHVDHGKT)) interacts with GTP. Residues 580 to 584 (GITQH) are G2. The segment at 601–604 (DTPG) is G3. GTP contacts are provided by residues 601-605 (DTPGH) and 655-658 (NKID). The segment at 655 to 658 (NKID) is G4. Residues 691-693 (SAK) are G5.

Belongs to the TRAFAC class translation factor GTPase superfamily. Classic translation factor GTPase family. IF-2 subfamily.

Its subcellular location is the cytoplasm. In terms of biological role, one of the essential components for the initiation of protein synthesis. Protects formylmethionyl-tRNA from spontaneous hydrolysis and promotes its binding to the 30S ribosomal subunits. Also involved in the hydrolysis of GTP during the formation of the 70S ribosomal complex. This chain is Translation initiation factor IF-2, found in Symbiobacterium thermophilum (strain DSM 24528 / JCM 14929 / IAM 14863 / T).